A 230-amino-acid polypeptide reads, in one-letter code: Demethylmenaquinone methyltransferase (230 aa).

Residues threonine 62, aspartate 80, 100 to 101 (DG), and serine 117 each bind S-adenosyl-L-methionine.

The protein belongs to the class I-like SAM-binding methyltransferase superfamily. MenG/UbiE family.

It carries out the reaction a 2-demethylmenaquinol + S-adenosyl-L-methionine = a menaquinol + S-adenosyl-L-homocysteine + H(+). It functions in the pathway quinol/quinone metabolism; menaquinone biosynthesis; menaquinol from 1,4-dihydroxy-2-naphthoate: step 2/2. Methyltransferase required for the conversion of demethylmenaquinol (DMKH2) to menaquinol (MKH2). This Corynebacterium glutamicum (strain ATCC 13032 / DSM 20300 / JCM 1318 / BCRC 11384 / CCUG 27702 / LMG 3730 / NBRC 12168 / NCIMB 10025 / NRRL B-2784 / 534) protein is Demethylmenaquinone methyltransferase.